The sequence spans 356 residues: Heparan sulfate 2-O-sulfotransferase 1 (356 aa).

Topologically, residues 1–11 (MGLLRIMMPPK) are cytoplasmic. Residues 12–28 (LQLLAVLTFGVLMLFLE) traverse the membrane as a helical; Signal-anchor for type II membrane protein segment. Positions 24 to 51 (MLFLENQIQNLEESREKLERAIARHEVR) form a coiled coil. The Lumenal segment spans residues 29 to 356 (NQIQNLEESR…FYEKIYPKSN (328 aa)). Residues K83, T84, A85, S86, T87, and S88 each contribute to the adenosine 3',5'-bisphosphate site. 2 N-linked (GlcNAc...) asparagine glycosylation sites follow: N108 and N127. Catalysis depends on residues H140 and H142. 2 residues coordinate adenosine 3',5'-bisphosphate: R164 and S172. 2 disulfide bridges follow: C201/C209 and C222/C228. Y279, S285, T290, and K293 together coordinate adenosine 3',5'-bisphosphate.

It belongs to the sulfotransferase 3 family. As to quaternary structure, homotrimer.

It localises to the golgi apparatus membrane. Its function is as follows. Catalyzes the transfer of a sulfo group from 3'-phospho-5'-adenylyl sulfate (PAPS) to the 2-OH position of iduronic acid (IdoA) or glucuronic acid (GlcA) within the heparan sulfate (HS) chain and participates in HS biosynthesis. The sequence is that of Heparan sulfate 2-O-sulfotransferase 1 from Xenopus laevis (African clawed frog).